Consider the following 875-residue polypeptide: E3 SUMO-protein ligase SIZ1 (875 aa).

Positions 12-46 constitute an SAP domain; sequence LAYFRIKELKDILNQLGLPKQGKKQDLIDRVLALL. A PHD-type zinc finger spans residues 114–169; it reads KVRCICSSTMVNDSMIQCEDQRCQVWQHLNCVLIPDKPGESAEVPPVFYCELCRLS. Residues 349 to 430 form an SP-RING-type zinc finger; it reads SDLEVVAESV…FNRITSLLRN (82 aa). Zn(2+)-binding residues include C380, H382, C403, and C406. Positions 796 to 820 are disordered; sequence GGGGNEEPAPADVNSQPQIPSTETG. Residues 808–819 are compositionally biased toward polar residues; it reads VNSQPQIPSTET.

Belongs to the PIAS family.

It localises to the nucleus. It participates in protein modification; protein sumoylation. Functionally, probable SUMO E3 ligase that may regulate Pi starvation responses. This Oryza sativa subsp. japonica (Rice) protein is E3 SUMO-protein ligase SIZ1 (SIZ1).